The chain runs to 339 residues: Dihydroorotate dehydrogenase (quinone) (339 aa).

FMN-binding positions include 62–66 (AGMDK) and threonine 86. Lysine 66 provides a ligand contact to substrate. 111 to 115 (NRMGF) contacts substrate. The FMN site is built by asparagine 139 and asparagine 172. A substrate-binding site is contributed by asparagine 172. Serine 175 (nucleophile) is an active-site residue. Asparagine 177 provides a ligand contact to substrate. 2 residues coordinate FMN: lysine 217 and threonine 245. 246-247 (NT) contacts substrate. FMN is bound by residues glycine 268, glycine 297, and 318–319 (YS).

It belongs to the dihydroorotate dehydrogenase family. Type 2 subfamily. Monomer. It depends on FMN as a cofactor.

The protein localises to the cell membrane. The enzyme catalyses (S)-dihydroorotate + a quinone = orotate + a quinol. It functions in the pathway pyrimidine metabolism; UMP biosynthesis via de novo pathway; orotate from (S)-dihydroorotate (quinone route): step 1/1. In terms of biological role, catalyzes the conversion of dihydroorotate to orotate with quinone as electron acceptor. In Shewanella piezotolerans (strain WP3 / JCM 13877), this protein is Dihydroorotate dehydrogenase (quinone).